The sequence spans 416 residues: Basic salivary proline-rich protein 2 (416 aa).

The N-terminal stretch at 1 to 16 is a signal peptide; sequence MLLILLSVALLALSSA. Q17 bears the Pyrrolidone carboxylic acid mark. The span at 19–28 shows a compositional bias: polar residues; sequence LNEDVSQEES. The interval 19-416 is disordered; that stretch reads LNEDVSQEES…QGGRPSRPPQ (398 aa). Phosphoserine is present on S24. Residues 34–47 are compositionally biased toward low complexity; that stretch reads GNPQGAPPQGGNKP. Composition is skewed to pro residues over residues 48–104 and 112–165; these read QGPP…PPPQ and RSPP…PPPQ. Position 52 is a phosphoserine (S52). Repeat copies occupy residues 53–72, 74–93, 94–113, 114–133, 135–154, 155–174, 176–195, 197–216, 217–236, 238–257, 259–278, 279–298, 300–319, 321–340, and 341–360. The 15 X 20 AA approximate tandem repeats of P-P-G-K-P-Q-G-P-P-P-Q-G-[GD]-[NKS]-[KSQ]-[PRS]-[QRS] [GPS]-[PSAR]-[PSR] stretch occupies residues 53-360; that stretch reads PPGKPQGPPP…QGGSKSRSAR (308 aa). N168 carries N-linked (GlcNAc...) asparagine glycosylation. The span at 177–227 shows a compositional bias: pro residues; the sequence is PGKPQGPPPQGGNQPQGPPPPPGKPQGPPPQGGNKPQGPPPPGKPQGPPPQ. N230 is a glycosylation site (N-linked (GlcNAc...) asparagine). S232 carries O-linked (Hex) serine glycosylation. Pro residues predominate over residues 239-289; that stretch reads PGKPQGPPPQGGNQPQGPPPPPGKPQGPPPQGGNKPQGPPPPGKPQGPPPQ. N272 carries an N-linked (GlcNAc...) asparagine glycan. Positions 290–300 are enriched in low complexity; the sequence is GGSKSRSSRSP. Pro residues-rich tracts occupy residues 301-351 and 378-416; these read PGKP…PPPQ and QGPP…RPPQ.

Post-translationally, N- and O-glycosylated. In head and neck cancer patients, O-glycosylated with glucosylgalactosyl carbohydrate moiety. This modification would require prior hydroxylation on the lysine residue. In terms of processing, proteolytically cleaved at the tripeptide Xaa-Pro-Gln, where Xaa in the P(3) position is mostly lysine. The endoprotease may be of microbial origin. Pyroglutamate formation occurs on terminal Gln residues of cleaved peptides. Pyroglutamate formation found on at least Gln-398 and Gln-400.

It is found in the secreted. This chain is Basic salivary proline-rich protein 2 (PRB2), found in Homo sapiens (Human).